A 334-amino-acid polypeptide reads, in one-letter code: Glycerol-3-phosphate dehydrogenase [NAD(P)+] (334 aa).

NADPH contacts are provided by tryptophan 13, arginine 33, and lysine 106. Lysine 106, glycine 137, and serine 139 together coordinate sn-glycerol 3-phosphate. Alanine 141 provides a ligand contact to NADPH. Sn-glycerol 3-phosphate-binding residues include lysine 192, aspartate 245, serine 255, arginine 256, and asparagine 257. Residue lysine 192 is the Proton acceptor of the active site. Arginine 256 provides a ligand contact to NADPH. Residues valine 280 and glutamate 282 each contribute to the NADPH site.

Belongs to the NAD-dependent glycerol-3-phosphate dehydrogenase family.

The protein localises to the cytoplasm. It catalyses the reaction sn-glycerol 3-phosphate + NAD(+) = dihydroxyacetone phosphate + NADH + H(+). The catalysed reaction is sn-glycerol 3-phosphate + NADP(+) = dihydroxyacetone phosphate + NADPH + H(+). It functions in the pathway membrane lipid metabolism; glycerophospholipid metabolism. Functionally, catalyzes the reduction of the glycolytic intermediate dihydroxyacetone phosphate (DHAP) to sn-glycerol 3-phosphate (G3P), the key precursor for phospholipid synthesis. This is Glycerol-3-phosphate dehydrogenase [NAD(P)+] from Chlamydia trachomatis serovar L2 (strain ATCC VR-902B / DSM 19102 / 434/Bu).